We begin with the raw amino-acid sequence, 923 residues long: Isoleucine--tRNA ligase (923 aa).

The short motif at 57 to 67 (PYANGDIHMGH) is the 'HIGH' region element. E553 lines the L-isoleucyl-5'-AMP pocket. The 'KMSKS' region motif lies at 594 to 598 (KMSKS). Position 597 (K597) interacts with ATP. Zn(2+) contacts are provided by C888, C891, C908, and C911.

This sequence belongs to the class-I aminoacyl-tRNA synthetase family. IleS type 1 subfamily. Monomer. Zn(2+) serves as cofactor.

The protein localises to the cytoplasm. It carries out the reaction tRNA(Ile) + L-isoleucine + ATP = L-isoleucyl-tRNA(Ile) + AMP + diphosphate. Its function is as follows. Catalyzes the attachment of isoleucine to tRNA(Ile). As IleRS can inadvertently accommodate and process structurally similar amino acids such as valine, to avoid such errors it has two additional distinct tRNA(Ile)-dependent editing activities. One activity is designated as 'pretransfer' editing and involves the hydrolysis of activated Val-AMP. The other activity is designated 'posttransfer' editing and involves deacylation of mischarged Val-tRNA(Ile). This is Isoleucine--tRNA ligase from Shouchella clausii (strain KSM-K16) (Alkalihalobacillus clausii).